Reading from the N-terminus, the 418-residue chain is Sialidase-3 (418 aa).

The FRIP motif motif lies at 24–27; sequence YRIP. Residues Arg-25 and Arg-45 each coordinate substrate. Asp-50 serves as the catalytic Proton acceptor. The BNR 1 repeat unit spans residues 129 to 140; it reads LCSEDAGCSWGE. 2 residues coordinate substrate: Tyr-179 and Tyr-181. Residues 203–214 form a BNR 2 repeat; sequence SDDFGVTWHHGK. Substrate-binding residues include Glu-223 and Arg-243. A BNR 3 repeat occupies 254–265; it reads STDSGGCFQKPT. Ser-312 carries the post-translational modification Phosphoserine. Residue Arg-339 coordinates substrate. The Nucleophile role is filled by Tyr-369. Glu-386 is a catalytic residue.

Belongs to the glycosyl hydrolase 33 family. In terms of assembly, interacts with CAV1; this interaction enhances NEU3 sialidase activity within caveola. Interacts with EGFR; this interaction mediates desialylation of EGFR and enhances downstream signaling. In terms of processing, palmitoylated; may regulate intracellular trafficking and anchorage to plasma membrane and endomembranes. In terms of tissue distribution, expressed in heart, brain and cerebral cortex.

The protein resides in the cell membrane. It localises to the membrane. The protein localises to the caveola. It is found in the early endosome membrane. Its subcellular location is the recycling endosome membrane. The protein resides in the lysosome membrane. It carries out the reaction Hydrolysis of alpha-(2-&gt;3)-, alpha-(2-&gt;6)-, alpha-(2-&gt;8)- glycosidic linkages of terminal sialic acid residues in oligosaccharides, glycoproteins, glycolipids, colominic acid and synthetic substrates.. It catalyses the reaction a ganglioside GD1a + H2O = a ganglioside GM1 + N-acetylneuraminate. The catalysed reaction is a ganglioside GD1a (d18:1(4E)) + H2O = a ganglioside GM1 (d18:1(4E)) + N-acetylneuraminate. The enzyme catalyses a ganglioside GD1b + H2O = a ganglioside GM1 + N-acetylneuraminate. It carries out the reaction a ganglioside GD1b (d18:1(4E)) + H2O = a ganglioside GM1 (d18:1(4E)) + N-acetylneuraminate. It catalyses the reaction a ganglioside GD3 + H2O = a ganglioside GM3 + N-acetylneuraminate. The catalysed reaction is a ganglioside GD3 (d18:1(4E)) + H2O = a ganglioside GM3 (d18:1(4E)) + N-acetylneuraminate. The enzyme catalyses a ganglioside GM3 + H2O = a beta-D-galactosyl-(1-&gt;4)-beta-D-glucosyl-(1&lt;-&gt;1)-ceramide + N-acetylneuraminate. It carries out the reaction a ganglioside GM1 + H2O = a ganglioside GA1 + N-acetylneuraminate. It catalyses the reaction a ganglioside GM1 (d18:1(4E)) + H2O = a ganglioside GA1 (d18:1(4E)) + N-acetylneuraminate. The catalysed reaction is a ganglioside GM2 (d18:1(4E)) + H2O = a ganglioside GA2 (d18:1(4E)) + N-acetylneuraminate. The enzyme catalyses a ganglioside GM3 (d18:1(4E)) + H2O = a beta-D-Gal-(1-&gt;4)-beta-D-Glc-(1&lt;-&gt;1)-Cer(d18:1(4E)) + N-acetylneuraminate. It carries out the reaction a ganglioside GT1b + H2O = a ganglioside GD1b + N-acetylneuraminate. Exo-alpha-sialidase that catalyzes the hydrolytic cleavage of the terminal sialic acid (N-acetylneuraminic acid, Neu5Ac) of a glycan moiety in the catabolism of glycolipids, glycoproteins and oligosacharides. Displays high catalytic efficiency for gangliosides including alpha-(2-&gt;3)-sialylated GD1a and GM3 and alpha-(2-&gt;8)-sialylated GD3. Plays a role in the regulation of transmembrane signaling through the modulation of ganglioside content of the lipid bilayer and by direct interaction with signaling receptors, such as EGFR. Desialylates EGFR and activates downstream signaling in proliferating cells. Contributes to clathrin-mediated endocytosis by regulating sorting of endocytosed receptors to early and recycling endosomes. The chain is Sialidase-3 (Neu3) from Mus musculus (Mouse).